A 211-amino-acid polypeptide reads, in one-letter code: Thiamine-phosphate synthase (211 aa).

Residues 37-41 (QLRIK) and Asn69 contribute to the 4-amino-2-methyl-5-(diphosphooxymethyl)pyrimidine site. Residues Asp70 and Asp89 each contribute to the Mg(2+) site. Ser108 contributes to the 4-amino-2-methyl-5-(diphosphooxymethyl)pyrimidine binding site. 2-[(2R,5Z)-2-carboxy-4-methylthiazol-5(2H)-ylidene]ethyl phosphate is bound at residue 134 to 136 (TQT). Lys137 lines the 4-amino-2-methyl-5-(diphosphooxymethyl)pyrimidine pocket. Residues Gly166 and 186–187 (VS) contribute to the 2-[(2R,5Z)-2-carboxy-4-methylthiazol-5(2H)-ylidene]ethyl phosphate site.

Belongs to the thiamine-phosphate synthase family. Mg(2+) is required as a cofactor.

It carries out the reaction 2-[(2R,5Z)-2-carboxy-4-methylthiazol-5(2H)-ylidene]ethyl phosphate + 4-amino-2-methyl-5-(diphosphooxymethyl)pyrimidine + 2 H(+) = thiamine phosphate + CO2 + diphosphate. The enzyme catalyses 2-(2-carboxy-4-methylthiazol-5-yl)ethyl phosphate + 4-amino-2-methyl-5-(diphosphooxymethyl)pyrimidine + 2 H(+) = thiamine phosphate + CO2 + diphosphate. It catalyses the reaction 4-methyl-5-(2-phosphooxyethyl)-thiazole + 4-amino-2-methyl-5-(diphosphooxymethyl)pyrimidine + H(+) = thiamine phosphate + diphosphate. It participates in cofactor biosynthesis; thiamine diphosphate biosynthesis; thiamine phosphate from 4-amino-2-methyl-5-diphosphomethylpyrimidine and 4-methyl-5-(2-phosphoethyl)-thiazole: step 1/1. In terms of biological role, condenses 4-methyl-5-(beta-hydroxyethyl)thiazole monophosphate (THZ-P) and 2-methyl-4-amino-5-hydroxymethyl pyrimidine pyrophosphate (HMP-PP) to form thiamine monophosphate (TMP). The chain is Thiamine-phosphate synthase from Escherichia coli O6:H1 (strain CFT073 / ATCC 700928 / UPEC).